The chain runs to 300 residues: MLHLIGLGLSHETDITVRGLETIKKCKRVYLEAYTSILMAAEKETLEKFYGKELILADREMVEQASDDILAGAQEDDIAFLVVGDPFGATTHTDLVIRARELGIKYQTIHNASVMNAVGACGLQLYNFGQTVSLVFFTDSWKPDSFYDKIHENRKIGLHTLVLLDIKVKEQSIENIMRGRNVFEPPRYMSIEQAASQLLEIEESRDEKVYCSDTPAIAVSRLGSPRQCIKAGSLGELAEYESGEPLHSLIVLGNNVHDLEIDFLVEFADDPEAFKALITKDAENFKKEVKIMSYSDDDDE.

S-adenosyl-L-methionine is bound by residues leucine 9, aspartate 85, glycine 88, 113-114 (SV), leucine 164, leucine 222, and histidine 247.

The protein belongs to the diphthine synthase family.

The protein localises to the cytoplasm. The catalysed reaction is 2-[(3S)-amino-3-carboxypropyl]-L-histidyl-[translation elongation factor 2] + 4 S-adenosyl-L-methionine = diphthine methyl ester-[translation elongation factor 2] + 4 S-adenosyl-L-homocysteine + 3 H(+). It participates in protein modification; peptidyl-diphthamide biosynthesis. S-adenosyl-L-methionine-dependent methyltransferase that catalyzes four methylations of the modified target histidine residue in translation elongation factor 2 (EF-2), to form an intermediate called diphthine methyl ester. The four successive methylation reactions represent the second step of diphthamide biosynthesis. The chain is Diphthine methyl ester synthase (DPH5) from Yarrowia lipolytica (strain CLIB 122 / E 150) (Yeast).